The primary structure comprises 595 residues: MPVRQLPETIVNRIAAGEVVERPASVVKELVENAIDAGASRIDIFSDGGGRRKIVIADDGSGMTQADLALAVDRHATSKLDDEDLLQIRTLGFRGEALPSIGAVARLSITTRHAAEPHAWALRVEGGDKTPIAPAALTQGTRVEVADLFFATPARLKFLKTDRTEAEAIREVVRRLAMARPDVAFTLAGEERAPVTWAAALPGAPGQLIRLGDILGADFRANAIEVRAEREGVVVEGFAAAPSLTKANALGQYLFVNGRPVRDKLILGAVRAAYSDYLPRDRHPVVALFVTLDAREVDANVHPAKTEVRFRNSGLVRALIVHALKDGLAREGRRTAANSASSVISTFRPASMPPANWDWRSSPSYPVGGSAAPSFAERAQAAFDVGAPSADIRPQEVTPDLLDRPLGAARTQIHETYIVSQTRDGLIVIDQHAAHERIVYERLKASLEANGVQRQILLIPDIVEMDEATVERLVARAEELAQFGLVIESFGPGAVAVRETPSLLGKTDASGLLRDLAEHMAEWDEALPLERRLMHVAATMACHGSVRAGRVLKPEEMNALLREMEATPNSGQCNHGRPTYVELTLADIEKLFGRR.

Belongs to the DNA mismatch repair MutL/HexB family.

Functionally, this protein is involved in the repair of mismatches in DNA. It is required for dam-dependent methyl-directed DNA mismatch repair. May act as a 'molecular matchmaker', a protein that promotes the formation of a stable complex between two or more DNA-binding proteins in an ATP-dependent manner without itself being part of a final effector complex. The polypeptide is DNA mismatch repair protein MutL (Rhodopseudomonas palustris (strain ATCC BAA-98 / CGA009)).